The sequence spans 2339 residues: Voltage-dependent N-type calcium channel subunit alpha-1B (2339 aa).

Residues 1-37 are disordered; it reads MVRFGDELGGRYGGPGGGERARGGGAGGAGGPGPGGL. The Cytoplasmic segment spans residues 1-90; it reads MVRFGDELGG…DNVVRKYAKR (90 aa). Over residues 10–37 the composition is skewed to gly residues; the sequence is GRYGGPGGGERARGGGAGGAGGPGPGGL. Position 22 is an omega-N-methylarginine (Arg22). Residues 82 to 359 form an I repeat; that stretch reads NVVRKYAKRI…LVLGVLSGEF (278 aa). Residues 91–114 traverse the membrane as a helical segment; the sequence is ITEWPPFEYMILATIIANCIVLAL. The Extracellular segment spans residues 115–131; sequence EQHLPDGDKTPMSERLD. Residues 132–152 form a helical membrane-spanning segment; sequence DTEPYFIGIFCFEAGIKIIAL. The Cytoplasmic segment spans residues 153-163; it reads GFVFHKGSYLR. A helical membrane pass occupies residues 164-182; it reads NGWNVMDFVVVLTGILATA. Residues 183–187 are Extracellular-facing; the sequence is GTDFD. A helical membrane pass occupies residues 188 to 211; it reads LRTLRAVRVLRPLKLVSGIPSLQV. At 212 to 221 the chain is on the cytoplasmic side; that stretch reads VLKSIMKAMV. Residues 222–244 traverse the membrane as a helical segment; that stretch reads PLLQIGLLLFFAILMFAIIGLEF. The Extracellular segment spans residues 245–331; the sequence is YMGKFHKACF…NTNDAAGNTW (87 aa). An N-linked (GlcNAc...) asparagine glycan is attached at Asn256. The chain crosses the membrane as a helical span at residues 332–356; it reads NWLYFIPLIIIGSFFMLNLVLGVLS. Over 357-482 the chain is Cytoplasmic; that stretch reads GEFAKERERV…FFIRRMVKAQ (126 aa). A binding to the beta subunit region spans residues 379-396; the sequence is QQIERELNGYLEWIFKAE. A Phosphoserine modification is found at Ser411. 451 to 458 lines the ATP pocket; the sequence is ASLKSGKT. One copy of the II repeat lies at 468–712; that stretch reads EKMFRFFIRR…VFLAIAVDNL (245 aa). Residues 483–501 form a helical membrane-spanning segment; sequence SFYWVVLCVVALNTLCVAM. Residues 502–511 are Extracellular-facing; that stretch reads VHYNQPRRLT. A helical transmembrane segment spans residues 512 to 534; the sequence is TTLYFAEFVFLGLFLTEMSLKMY. At 535 to 544 the chain is on the cytoplasmic side; that stretch reads GLGPRSYFRS. A 1,2-diacyl-sn-glycero-3-phospho-(1D-myo-inositol-4,5-bisphosphate) is bound at residue Ser544. A helical transmembrane segment spans residues 545–566; sequence SFNCFDFGVIVGSVFEVVWAAI. At 567–573 the chain is on the extracellular side; sequence KPGSSFG. A helical membrane pass occupies residues 574–586; the sequence is ISVLRALRLLRIF. A 1,2-diacyl-sn-glycero-3-phospho-(1D-myo-inositol-4,5-bisphosphate) contacts are provided by Arg584 and Lys587. At 587 to 604 the chain is on the cytoplasmic side; the sequence is KVTKYWSSLRNLVVSLLN. A helical membrane pass occupies residues 605–630; sequence SMKSIISLLFLLFLFIVVFALLGMQL. Residues 631 to 682 lie on the Extracellular side of the membrane; the sequence is FGGQFNFQDETPTTNFDTFPAAILTVFQILTGEDWNAVMYHGIESQGGVSKG. Residues 683–709 form a helical membrane-spanning segment; that stretch reads MFSSFYFIVLTLFGNYTLLNVFLAIAV. Over 710 to 1151 the chain is Cytoplasmic; the sequence is DNLANAQELT…FCHYIVTMRY (442 aa). Ser745, Ser748, and Ser783 each carry phosphoserine. 4 stretches are compositionally biased toward basic and acidic residues: residues 816 to 826, 857 to 886, 922 to 932, and 965 to 976; these read PLVVELGRDGA, KDKTPAAGDQDRAEAPKAESGEPGAREERP, GSPEEAAEREP, and GPREAESGEEPA. 2 disordered regions span residues 816 to 1038 and 1054 to 1076; these read PLVV…VTVG and QPEDADNQRNVTRMGSQPPDPNT. A compositionally biased stretch (basic residues) spans 977-986; it reads RRHRARHKAQ. Positions 990–1029 are enriched in basic and acidic residues; it reads EAVEKETTEKEATEKEAEIVEADKEKELRNHQPREPHCDL. Ser1069 is modified (phosphoserine). An III repeat occupies 1137–1419; it reads NLLRRFCHYI…IFVALIIITF (283 aa). Residues 1152–1170 traverse the membrane as a helical segment; the sequence is FEVVILVVIALSSIALAAE. The Extracellular portion of the chain corresponds to 1171 to 1178; sequence DPVRTDSP. The chain crosses the membrane as a helical span at residues 1179–1203; that stretch reads RNNALKYLDYIFTGVFTFEMVIKMI. The Cytoplasmic portion of the chain corresponds to 1204-1217; the sequence is DLGLLLHPGAYFRD. A helical membrane pass occupies residues 1218 to 1238; the sequence is LWNILDFIVVSGALVAFAFSG. Residues 1239–1244 are Extracellular-facing; sequence SKGKDI. Residues 1245–1265 form a helical membrane-spanning segment; the sequence is NTIKSLRVLRVLRPLKTIKRL. At 1266–1283 the chain is on the cytoplasmic side; sequence PKLKAVFDCVVNSLKNVL. Residues 1284–1303 form a helical membrane-spanning segment; the sequence is NILIVYMLFMFIFAVIAVQL. Residues 1304–1390 lie on the Extracellular side of the membrane; sequence FKGKFFYCTD…EQGPSPGYRM (87 aa). A helical transmembrane segment spans residues 1391-1416; sequence ELSIFYVVYFVVFPFFFVNIFVALII. Residues 1417 to 1471 lie on the Cytoplasmic side of the membrane; the sequence is ITFQEQGDKVMSECSLEKNERACIDFAISAKPLTRYMPQNRQSFQYKTWTFVVSP. The stretch at 1456 to 1711 is one IV repeat; it reads NRQSFQYKTW…LFVAVIMDNF (256 aa). A helical membrane pass occupies residues 1472-1490; it reads PFEYFIMAMIALNTVVLMM. Topologically, residues 1491–1498 are extracellular; that stretch reads KFYDAPYE. A helical membrane pass occupies residues 1499–1523; it reads YELMLKCLNIVFTSMFSMECVLKII. At 1524–1533 the chain is on the cytoplasmic side; that stretch reads AFGVLNYFRD. The helical transmembrane segment at 1534-1555 threads the bilayer; it reads AWNVFDFVTVLGSITDILVTEI. Topologically, residues 1556–1563 are extracellular; sequence AETNNFIN. Asn1563 carries N-linked (GlcNAc...) asparagine glycosylation. The chain crosses the membrane as a helical span at residues 1564-1582; that stretch reads LSFLRLFRAARLIKLLRQG. The Cytoplasmic segment spans residues 1583 to 1601; that stretch reads YTIRILLWTFVQSFKALPY. A helical membrane pass occupies residues 1602–1621; that stretch reads VCLLIAMLFFIYAIIGMQVF. Over 1622 to 1683 the chain is Extracellular; it reads GNIALDDDTS…ANATECGSDF (62 aa). N-linked (GlcNAc...) asparagine glycosylation occurs at Asn1675. The chain crosses the membrane as a helical span at residues 1684–1707; the sequence is AYFYFVSFIFLCSFLMLNLFVAVI. Residues 1708-2339 are Cytoplasmic-facing; sequence MDNFEYLTRD…YHHPDQDHWC (632 aa). The EF-hand domain maps to 1724–1759; the sequence is HHLDEFIRVWAEYDPAACGRISYNDMFEMLKHMSPP. Residues Asp1737, Arg1743, and Asp1748 each contribute to the Ca(2+) site. Positions 1916–1931 are enriched in polar residues; sequence SSTSLSNGGAIQNQES. 2 disordered regions span residues 1916–1968 and 1981–2206; these read SSTS…VGRS and TRRG…YKTA. The segment covering 1946–1960 has biased composition (basic and acidic residues); it reads DAPHEARPPLERGHS. A compositionally biased stretch (basic residues) spans 2049–2063; that stretch reads SHHHHHRCHRRRDRK. A Phosphoserine modification is found at Ser2066. Basic and acidic residues predominate over residues 2098 to 2116; it reads CRRERERRQERGRSQERRQ. Positions 2143 to 2153 are enriched in low complexity; it reads PSLSSHPTSPT. The segment covering 2164–2180 has biased composition (polar residues); that stretch reads GSGSVNGSPLLSTSGAS. 3 positions are modified to phosphoserine: Ser2224, Ser2233, and Ser2256.

The protein belongs to the calcium channel alpha-1 subunit (TC 1.A.1.11) family. CACNA1B subfamily. As to quaternary structure, multisubunit complex consisting of alpha-1, alpha-2, beta and delta subunits in a 1:1:1:1 ratio. The channel activity is directed by the pore-forming and voltage-sensitive alpha-1 subunit. In many cases, this subunit is sufficient to generate voltage-sensitive calcium channel activity. The auxiliary subunits beta and alpha-2/delta linked by a disulfide bridge regulate the channel activity. Interacts with RIMS1. Interacts with FMR1 (via C-terminus); this interaction induces a decrease in the number of presynaptic functional CACNA1B channels at the cell surface. Post-translationally, phosphorylated in vitro by CaM-kinase II, PKA, PKC and CGPK. In terms of tissue distribution, isoform Alpha-1b-1 and isoform Alpha-1b-2 are expressed in the central nervous system, but not in skeletal muscle or aorta. Expressed in the cerebral white matter, cortex, hippocampus, basal ganglia, and cerebellum.

The protein localises to the membrane. It carries out the reaction Ca(2+)(in) = Ca(2+)(out). With respect to regulation, is specifically blocked by omega-conotoxin GVIA. Is specifically blocked by omega-conotoxin MVIIA (ziconotide). Is insensitive to dihydropyridines (DHP). Its activity is regulated as follows. Is specifically blocked by omega-conotoxin MVIIA (ziconotide). Is insensitive to dihydropyridines (DHP). Voltage-sensitive calcium channels (VSCC) mediate the entry of calcium ions into excitable cells and are also involved in a variety of calcium-dependent processes, including muscle contraction, hormone or neurotransmitter release, gene expression, cell motility, cell division and cell death. This alpha-1B subunit gives rise to N-type calcium currents. N-type calcium channels belong to the 'high-voltage activated' (HVA) group. They are involved in pain signaling. Calcium channels containing alpha-1B subunit may play a role in directed migration of immature neurons. Mediates Ca(2+) release probability at hippocampal neuronal soma and synaptic terminals. In terms of biological role, voltage-sensitive calcium channels (VSCC) mediate the entry of calcium ions into excitable cells and are also involved in a variety of calcium-dependent processes, including muscle contraction, hormone or neurotransmitter release, gene expression, cell motility, cell division and cell death. This alpha-1B subunit gives rise to N-type calcium currents. The sequence is that of Voltage-dependent N-type calcium channel subunit alpha-1B (CACNA1B) from Homo sapiens (Human).